The following is a 358-amino-acid chain: Methylthioribose-1-phosphate isomerase (358 aa).

Residues 54–56 (RGA), arginine 96, and glutamine 205 each bind substrate. Aspartate 246 (proton donor) is an active-site residue. 256-257 (GK) contacts substrate.

It belongs to the eIF-2B alpha/beta/delta subunits family. MtnA subfamily.

The catalysed reaction is 5-(methylsulfanyl)-alpha-D-ribose 1-phosphate = 5-(methylsulfanyl)-D-ribulose 1-phosphate. It participates in amino-acid biosynthesis; L-methionine biosynthesis via salvage pathway; L-methionine from S-methyl-5-thio-alpha-D-ribose 1-phosphate: step 1/6. In terms of biological role, catalyzes the interconversion of methylthioribose-1-phosphate (MTR-1-P) into methylthioribulose-1-phosphate (MTRu-1-P). The chain is Methylthioribose-1-phosphate isomerase from Pseudomonas putida (strain ATCC 47054 / DSM 6125 / CFBP 8728 / NCIMB 11950 / KT2440).